The primary structure comprises 366 residues: Chorismate synthase (366 aa).

Arginine 48 and arginine 54 together coordinate NADP(+). FMN contacts are provided by residues 125–127 (RSS), 238–239 (NA), glycine 278, 293–297 (KPTSS), and arginine 319.

Belongs to the chorismate synthase family. In terms of assembly, homotetramer. The cofactor is FMNH2.

The catalysed reaction is 5-O-(1-carboxyvinyl)-3-phosphoshikimate = chorismate + phosphate. It participates in metabolic intermediate biosynthesis; chorismate biosynthesis; chorismate from D-erythrose 4-phosphate and phosphoenolpyruvate: step 7/7. Its function is as follows. Catalyzes the anti-1,4-elimination of the C-3 phosphate and the C-6 proR hydrogen from 5-enolpyruvylshikimate-3-phosphate (EPSP) to yield chorismate, which is the branch point compound that serves as the starting substrate for the three terminal pathways of aromatic amino acid biosynthesis. This reaction introduces a second double bond into the aromatic ring system. The sequence is that of Chorismate synthase from Paraburkholderia xenovorans (strain LB400).